A 227-amino-acid chain; its full sequence is UPF0173 metal-dependent hydrolase STK_14180 (227 aa).

It belongs to the UPF0173 family.

This is UPF0173 metal-dependent hydrolase STK_14180 from Sulfurisphaera tokodaii (strain DSM 16993 / JCM 10545 / NBRC 100140 / 7) (Sulfolobus tokodaii).